Consider the following 151-residue polypeptide: Protein-export protein SecB (151 aa).

The protein belongs to the SecB family. In terms of assembly, homotetramer, a dimer of dimers. One homotetramer interacts with 1 SecA dimer.

The protein resides in the cytoplasm. In terms of biological role, one of the proteins required for the normal export of preproteins out of the cell cytoplasm. It is a molecular chaperone that binds to a subset of precursor proteins, maintaining them in a translocation-competent state. It also specifically binds to its receptor SecA. The sequence is that of Protein-export protein SecB from Azoarcus sp. (strain BH72).